Reading from the N-terminus, the 479-residue chain is G-rich sequence factor 1 (479 aa).

A mitochondrion-targeting transit peptide spans 1 to 116; sequence MAGTRWVLGA…AAAAGPARGY (116 aa). 2 consecutive RRM domains span residues 149-245 and 249-325; these read YLIR…PSPV and GVVR…PSRR. S243 carries the post-translational modification Phosphoserine. Position 334 is a phosphoserine (S334). An RRM 3 domain is found at 400–479; that stretch reads HFVHMRGLPF…LFLNSCPKGK (80 aa).

In terms of assembly, monomer. Found in a complex with DDX28, DHX30, FASTKD2 and FASTKD5. Interacts with the mitochondrial RNase P complex subunit TRMT10C/MRPP1. Interacts with the 2 components of the mitochondrial degradosome complex, PNPT1 and SUPV3L1, in an RNA-dependent manner.

It localises to the mitochondrion matrix. Regulator of post-transcriptional mitochondrial gene expression, required for assembly of the mitochondrial ribosome and for recruitment of mRNA and lncRNA. Binds RNAs containing the 14 base G-rich element. Preferentially binds RNAs transcribed from three contiguous genes on the light strand of mtDNA, the ND6 mRNA, and the long non-coding RNAs for MT-CYB and MT-ND5, each of which contains multiple consensus binding sequences. Involved in the degradosome-mediated decay of non-coding mitochondrial transcripts (MT-ncRNA) and tRNA-like molecules. Acts by unwinding G-quadruplex RNA structures in MT-ncRNA, thus facilitating their degradation by the degradosome. G-quadruplexes (G4) are non-canonical 4 stranded structures formed by transcripts from the light strand of mtDNA. The chain is G-rich sequence factor 1 (Grsf1) from Mus musculus (Mouse).